Consider the following 427-residue polypeptide: Glutamyl-tRNA reductase (427 aa).

Substrate-binding positions include Thr-49–Arg-52, Ser-109, Glu-114–Gln-116, and Gln-120. Catalysis depends on Cys-50, which acts as the Nucleophile. NADP(+) is bound at residue Gly-188–Ala-193.

Belongs to the glutamyl-tRNA reductase family. As to quaternary structure, homodimer.

It catalyses the reaction (S)-4-amino-5-oxopentanoate + tRNA(Glu) + NADP(+) = L-glutamyl-tRNA(Glu) + NADPH + H(+). The protein operates within porphyrin-containing compound metabolism; protoporphyrin-IX biosynthesis; 5-aminolevulinate from L-glutamyl-tRNA(Glu): step 1/2. It functions in the pathway porphyrin-containing compound metabolism; chlorophyll biosynthesis. With respect to regulation, feedback inhibition by heme. In terms of biological role, catalyzes the NADPH-dependent reduction of glutamyl-tRNA(Glu) to glutamate 1-semialdehyde (GSA). This chain is Glutamyl-tRNA reductase, found in Synechocystis sp. (strain ATCC 27184 / PCC 6803 / Kazusa).